A 172-amino-acid polypeptide reads, in one-letter code: Adenine phosphoribosyltransferase (172 aa).

It belongs to the purine/pyrimidine phosphoribosyltransferase family. In terms of assembly, homodimer.

It localises to the cytoplasm. It carries out the reaction AMP + diphosphate = 5-phospho-alpha-D-ribose 1-diphosphate + adenine. It functions in the pathway purine metabolism; AMP biosynthesis via salvage pathway; AMP from adenine: step 1/1. Functionally, catalyzes a salvage reaction resulting in the formation of AMP, that is energically less costly than de novo synthesis. The protein is Adenine phosphoribosyltransferase of Staphylococcus saprophyticus subsp. saprophyticus (strain ATCC 15305 / DSM 20229 / NCIMB 8711 / NCTC 7292 / S-41).